A 224-amino-acid polypeptide reads, in one-letter code: Abasic site processing protein YoqW (224 aa).

Cysteine 2 serves as the catalytic Nucleophile. The residue at position 2 (cysteine 2) is a Thiazolidine linkage to a ring-opened DNA abasic site. Glutamate 106 is a catalytic residue.

The protein belongs to the SOS response-associated peptidase family.

Formation and reversal of DNA-protein cross-link depends on DNA context. Catalyzes formation of the thiazolidine linkage in presence of abasic sites in single-stranded DNA. Mediates the reversal of the thiazolidine cross-link in presence of double stranded DNA. In terms of biological role, sensor of abasic sites in single-stranded DNA (ssDNA) required to preserve genome integrity by promoting error-free repair of abasic sites. Recognizes and binds abasic sites in ssDNA at replication forks and chemically modifies the lesion by forming a covalent cross-link with DNA: forms a stable thiazolidine linkage between a ring-opened abasic site and the alpha-amino and sulfhydryl substituents of its N-terminal catalytic cysteine residue. The DNA-protein cross-link is then reversed: able to catalyze the reversal of the thiazolidine cross-link and cycle between a cross-link and a non-cross-linked state depending on DNA context: mediates self-reversal of the thiazolidine cross-link in double stranded DNA. May act as a protease: mediates autocatalytic processing of its N-terminal methionine in order to expose the catalytic cysteine. The polypeptide is Abasic site processing protein YoqW (yoqW) (Bacillus subtilis (strain 168)).